The primary structure comprises 1128 residues: Lysylphosphatidylglycerol biosynthesis bifunctional protein LysX (1128 aa).

The tract at residues 1 to 47 is disordered; the sequence is MDNPPPTGVAPRHLPPGSVHTGKVTASLSHRRPDSVQDAPPAPVPHR. Residues 1–632 form a phosphatidylglycerol lysyltransferase region; sequence MDNPPPTGVA…GLHADGSPPD (632 aa). Transmembrane regions (helical) follow at residues 55 to 75, 97 to 117, 121 to 141, 147 to 167, 184 to 204, and 240 to 260; these read VPHI…LWSL, APDT…AIAS, IAWW…GLRF, INAL…IAAW, GVLV…VEVF, and FVNV…VLTL. The tract at residues 619–644 is disordered; it reads DTLTGLHADGSPPDWPKPDLLDSGPR. The lysine--tRNA ligase stretch occupies residues 633–1128; that stretch reads WPKPDLLDSG…TLPFPLVKPR (496 aa). Residues 634 to 644 show a composition bias toward basic and acidic residues; sequence PKPDLLDSGPR. Mg(2+) is bound by residues aspartate 1040 and glutamate 1047.

The protein in the N-terminal section; belongs to the LPG synthetase family. It in the C-terminal section; belongs to the class-II aminoacyl-tRNA synthetase family. Mg(2+) is required as a cofactor.

It localises to the cell membrane. It carries out the reaction tRNA(Lys) + L-lysine + ATP = L-lysyl-tRNA(Lys) + AMP + diphosphate. It catalyses the reaction L-lysyl-tRNA(Lys) + a 1,2-diacyl-sn-glycero-3-phospho-(1'-sn-glycerol) = a 1,2-diacyl-sn-glycero-3-phospho-1'-(3'-O-L-lysyl)-sn-glycerol + tRNA(Lys). Catalyzes the production of L-lysyl-tRNA(Lys)transfer and the transfer of a lysyl group from L-lysyl-tRNA(Lys) to membrane-bound phosphatidylglycerol (PG), which produces lysylphosphatidylglycerol (LPG), one of the components of the bacterial membrane with a positive net charge. LPG synthesis contributes to the resistance to cationic antimicrobial peptides (CAMPs) and likely protects M.tuberculosis against the CAMPs produced by competiting microorganisms (bacteriocins). In fact, the modification of anionic phosphatidylglycerol with positively charged L-lysine results in repulsion of the peptides. This chain is Lysylphosphatidylglycerol biosynthesis bifunctional protein LysX (lysX), found in Nocardia farcinica (strain IFM 10152).